The sequence spans 264 residues: Undecaprenyl-diphosphatase 2 (264 aa).

The next 7 helical transmembrane spans lie at 29–49 (GSAFSAAMQLAALAAVISYFW), 77–97 (SWIVLATIPIVIAGVALSGVL), 107–127 (LTVIGWSCIAMAILLALAEIF), 137–157 (ASLADALLVGVAQIGALIPGV), 180–200 (FSFLLGLPAIALAGLKELWEL), 212–232 (VLATGLVVASISAFFAIWGLM), and 243–263 (FVIYRGLLGVVLLLGLAMGWL).

This sequence belongs to the UppP family.

Its subcellular location is the cell inner membrane. The enzyme catalyses di-trans,octa-cis-undecaprenyl diphosphate + H2O = di-trans,octa-cis-undecaprenyl phosphate + phosphate + H(+). Catalyzes the dephosphorylation of undecaprenyl diphosphate (UPP). Confers resistance to bacitracin. This is Undecaprenyl-diphosphatase 2 from Mesorhizobium japonicum (strain LMG 29417 / CECT 9101 / MAFF 303099) (Mesorhizobium loti (strain MAFF 303099)).